We begin with the raw amino-acid sequence, 211 residues long: Small ribosomal subunit protein uS3 (211 aa).

Positions 38 to 106 constitute a KH type-2 domain; that stretch reads LRSFVKKTFH…EVELHIVEVK (69 aa).

Belongs to the universal ribosomal protein uS3 family. Part of the 30S ribosomal subunit. Forms a tight complex with proteins S10 and S14.

In terms of biological role, binds the lower part of the 30S subunit head. Binds mRNA in the 70S ribosome, positioning it for translation. The sequence is that of Small ribosomal subunit protein uS3 from Anaplasma phagocytophilum (strain HZ).